The following is a 2038-amino-acid chain: Homeotic protein female sterile (2038 aa).

Residues 34-140 (RNTNQLQYLI…KVFLQKIESM (107 aa)) enclose the Bromo 1 domain. The tract at residues 145 to 284 (LELEPVTAKG…TTAMAGGVGG (140 aa)) is disordered. Composition is skewed to low complexity over residues 177 to 209 (GSGT…SGLQ) and 268 to 279 (PGSTNTTTTAMA). The chain crosses the membrane as a helical span at residues 330 to 350 (AAVAAAAAAAAAAAAAAGGAA). The segment at 396 to 432 (KGVKRKADTTTPTANAFESPYTQMDSKSAKIATRRES) is disordered. Polar residues predominate over residues 404–421 (TTTPTANAFESPYTQMDS). A helical membrane pass occupies residues 451–471 (VSGVPGLGGLVAGGVAGVAVA). Residue S452 is modified to Phosphoserine. The Bromo 2 domain occupies 475-584 (EKLSDALKSC…DVFEMRYANI (110 aa)). Disordered regions lie at residues 590–655 (ANAA…ERSA) and 677–735 (EASA…SVPG). Residues 593–619 (AHHHGHGHGHGHGHGHGHGHGHGHGHG) are compositionally biased toward basic residues. Positions 636–649 (SSEDSSDTENESNS) are enriched in acidic residues. A compositionally biased stretch (basic residues) spans 681 to 694 (KKKAKKKLKEKKKS). A compositionally biased stretch (gly residues) spans 711–735 (TGGGANAGGAGGPGSGGHGSVSVPG). A run of 3 helical transmembrane segments spans residues 750–770 (LNAL…AGGV), 790–810 (MAGG…AAGA), and 816–830 (AGTL…AAAG). 10 disordered regions span residues 832 to 858 (GGTT…SGAG), 891 to 956 (AGAA…SYDE), 1016 to 1139 (CLRK…GGNL), 1217 to 1260 (AVSA…ATVA), 1384 to 1416 (QPAG…QQQQ), 1502 to 1530 (MQQM…QQQH), 1580 to 1616 (IESM…PNAA), 1645 to 1728 (WSSL…VAQA), 1745 to 1918 (AAAA…SGAI), and 1957 to 2023 (MESG…GQID). The helical transmembrane segment at 874-894 (GAAGAAAGAGSVGGVGGAGAA) threads the bilayer. Positions 910-927 (GAGGGVGGANASAGGAGA) are enriched in gly residues. The NET domain occupies 942–1024 (DSEEEDTAKP…SCLRKKTHKK (83 aa)). At S943 the chain carries Phosphoserine. Basic residues predominate over residues 1017-1027 (LRKKTHKKPSG). Positions 1028–1046 (KSKDEQMAEKKQELEKRLQ) are enriched in basic and acidic residues. The span at 1079–1100 (SSSSSSSDSSSSSSSDSSSSDS) shows a compositional bias: low complexity. Polar residues-rich tracts occupy residues 1121 to 1131 (SNGSNVNNPSI) and 1222 to 1232 (TGQQHNKNGPN). Low complexity predominate over residues 1645 to 1665 (WSSLASANSPQSHTSSSSSSS). S1653 carries the phosphoserine modification. A compositionally biased stretch (basic and acidic residues) spans 1680 to 1708 (KAKERDRLKLLEAAEKEKKNQKEAAEKEQ). Composition is skewed to low complexity over residues 1716-1728 (SSSS…VAQA) and 1745-1760 (AAAA…PSGG). A helical membrane pass occupies residues 1731–1751 (IAAATAAAAVTLGAAAAAALA). Residues 1776–1791 (GDRDRDRDRERERERS) are compositionally biased toward basic and acidic residues. The segment covering 1800-1813 (NGNNSSNSANSNGP) has biased composition (low complexity). 2 stretches are compositionally biased toward gly residues: residues 1814-1828 (GSAG…GGSG) and 1835-1856 (PNSG…GGGP). Low complexity predominate over residues 1857-1884 (ALLNAGSNSNSGVGSGGAASSNSNSSVG). Residues 1885-1915 (GIVGSGGPGSNSQGSSGGGGGGPASGGGMGS) show a composition bias toward gly residues. Residues 1939–1959 (VAAAVAAQAILAASPLGAMES) traverse the membrane as a helical segment. Residues S1980 and S1988 each carry the phosphoserine modification. A compositionally biased stretch (low complexity) spans 1986–1997 (QSSPAQQSPQDR). Positions 1998–2017 (AAAKRAEQRRAEQERRRREA) are enriched in basic and acidic residues.

Its subcellular location is the membrane. In terms of biological role, required maternally for proper expression of other homeotic genes involved in pattern formation, such as Ubx. The sequence is that of Homeotic protein female sterile (fs(1)h) from Drosophila melanogaster (Fruit fly).